We begin with the raw amino-acid sequence, 319 residues long: 7,8-didemethyl-8-hydroxy-5-deazariboflavin synthase (319 aa).

The region spanning 6-236 (VTYSPAFTLV…AEITIQIPPN (231 aa)) is the Radical SAM core domain. [4Fe-4S] cluster is bound by residues Cys-20, Cys-24, and Cys-27.

This sequence belongs to the radical SAM superfamily. CofG family. In terms of assembly, consists of two subunits, CofG and CofH. It depends on [4Fe-4S] cluster as a cofactor.

It catalyses the reaction 5-amino-5-(4-hydroxybenzyl)-6-(D-ribitylimino)-5,6-dihydrouracil + S-adenosyl-L-methionine = 7,8-didemethyl-8-hydroxy-5-deazariboflavin + 5'-deoxyadenosine + L-methionine + NH4(+) + H(+). The protein operates within cofactor biosynthesis; coenzyme F0 biosynthesis. In terms of biological role, catalyzes the radical-mediated synthesis of 7,8-didemethyl-8-hydroxy-5-deazariboflavin from 5-amino-5-(4-hydroxybenzyl)-6-(D-ribitylimino)-5,6-dihydrouracil. This Gloeobacter violaceus (strain ATCC 29082 / PCC 7421) protein is 7,8-didemethyl-8-hydroxy-5-deazariboflavin synthase.